The primary structure comprises 416 residues: Probable 26S proteasome regulatory subunit rpn-6.2 (416 aa).

In terms of domain architecture, PCI spans 217–386; sequence YKTSFSYFYE…DTVVVYPKAD (170 aa).

This sequence belongs to the proteasome subunit S9 family. Component of the lid subcomplex of the 19S proteasome regulatory particle complex (also named PA700 complex). The 26S proteasome consists of a 20S proteasome core and two 19S regulatory subunits.

Functionally, component of the lid subcomplex of the 26S proteasome, a multiprotein complex involved in the ATP-dependent degradation of ubiquitinated proteins. In the complex, rpn-6.2 is required for proteasome assembly. This Caenorhabditis elegans protein is Probable 26S proteasome regulatory subunit rpn-6.2 (rpn-6.2).